We begin with the raw amino-acid sequence, 252 residues long: Undecaprenyl-diphosphatase (252 aa).

Helical transmembrane passes span 1 to 21, 42 to 62, 74 to 94, 95 to 115, 172 to 192, 206 to 226, and 232 to 252; these read MTTL…FLPI, HKAF…FLYF, ILIA…IIKS, LFNP…LILI, AAEF…FYDV, NLIV…KWLL, and HSFI…YLWY.

Belongs to the UppP family.

It localises to the cell inner membrane. It catalyses the reaction di-trans,octa-cis-undecaprenyl diphosphate + H2O = di-trans,octa-cis-undecaprenyl phosphate + phosphate + H(+). Catalyzes the dephosphorylation of undecaprenyl diphosphate (UPP). Confers resistance to bacitracin. In Sulfurihydrogenibium sp. (strain YO3AOP1), this protein is Undecaprenyl-diphosphatase.